A 393-amino-acid polypeptide reads, in one-letter code: NADH-quinone oxidoreductase subunit H 2 (393 aa).

10 helical membrane passes run 13 to 33, 79 to 99, 112 to 132, 158 to 178, 186 to 206, 240 to 260, 278 to 298, 309 to 329, 333 to 353, and 368 to 388; these read VLVT…IVLV, AIFW…FAVI, VGLL…ILGG, LAFA…QGIV, VWGI…YIIA, LYFL…VTLF, LNYG…FTLI, VLLG…IPMV, MIGL…MIWF, and IGWK…AVLG.

It belongs to the complex I subunit 1 family. NDH-1 is composed of 14 different subunits. Subunits NuoA, H, J, K, L, M, N constitute the membrane sector of the complex.

The protein resides in the cell inner membrane. It catalyses the reaction a quinone + NADH + 5 H(+)(in) = a quinol + NAD(+) + 4 H(+)(out). Its function is as follows. NDH-1 shuttles electrons from NADH, via FMN and iron-sulfur (Fe-S) centers, to quinones in the respiratory chain. The immediate electron acceptor for the enzyme in this species is believed to be ubiquinone. Couples the redox reaction to proton translocation (for every two electrons transferred, four hydrogen ions are translocated across the cytoplasmic membrane), and thus conserves the redox energy in a proton gradient. This subunit may bind ubiquinone. In Solibacter usitatus (strain Ellin6076), this protein is NADH-quinone oxidoreductase subunit H 2.